We begin with the raw amino-acid sequence, 305 residues long: Zinc transporter ZIP9 (305 aa).

A helical transmembrane segment spans residues isoleucine 7 to alanine 27. Residue asparagine 29 is glycosylated (N-linked (GlcNAc...) asparagine). 5 helical membrane passes run leucine 35–valine 55, alanine 104–glycine 124, isoleucine 144–alanine 164, leucine 174–phenylalanine 194, and histidine 208–serine 228. N-linked (GlcNAc...) asparagine glycosylation is present at asparagine 239. The next 2 membrane-spanning stretches (helical) occupy residues glycine 242–proline 262 and leucine 284–histidine 304.

Belongs to the ZIP transporter (TC 2.A.5) family.

It localises to the golgi apparatus. It is found in the trans-Golgi network membrane. The protein localises to the cell membrane. Its subcellular location is the cytoplasm. The protein resides in the perinuclear region. It localises to the mitochondrion. It is found in the nucleus. The catalysed reaction is Zn(2+)(in) = Zn(2+)(out). Functionally, transports zinc ions across cell and organelle membranes into the cytoplasm and regulates intracellular zinc homeostasis. Participates in the zinc ions efflux out of the secretory compartments. Regulates intracellular zinc level, resulting in the enhancement of AKT1 and MAPK3/MAPK1 (Erk1/2) phosphorylation in response to the BCR activation. Also functions as a membrane androgen receptor that mediates, through a G protein, the non-classical androgen signaling pathway, characterized by the activation of MAPK3/MAPK1 (Erk1/2) and transcription factors CREB1 or ATF1. Moreover, has dual functions as a membrane-bound androgen receptor and as an androgen-dependent zinc transporter both of which are mediated through an inhibitory G protein (Gi) that mediates both MAP kinase and zinc signaling leading to the androgen-dependent apoptotic process. The polypeptide is Zinc transporter ZIP9 (Gallus gallus (Chicken)).